We begin with the raw amino-acid sequence, 226 residues long: Prolactin (226 aa).

A signal peptide spans 1–29 (MNSQGSDRKAVTLLLLVMSNLLFCQNAHP). A disulfide bridge links C33 with C38. 2 positions are modified to phosphoserine: S53 and S117. 2 cysteine pairs are disulfide-bonded: C85-C201 and C218-C226.

It belongs to the somatotropin/prolactin family. Interacts with PRLR.

It localises to the secreted. Prolactin acts primarily on the mammary gland by promoting lactation. The chain is Prolactin (PRL) from Mesocricetus auratus (Golden hamster).